A 340-amino-acid polypeptide reads, in one-letter code: Phospho-N-acetylmuramoyl-pentapeptide-transferase (340 aa).

9 helical membrane passes run 22–42 (VVVP…LLIP), 69–89 (TMGG…WSGW), 95–115 (AVAL…WLVI), 129–149 (LLLQ…QGIP), 156–176 (GIGT…VLVG), 186–206 (GMDG…GLLH), 209–229 (PELS…LVHN), 235–257 (LFMG…LLGD), and 316–336 (VVGS…AWWH).

The protein belongs to the glycosyltransferase 4 family. MraY subfamily. Mg(2+) is required as a cofactor.

The protein localises to the cell inner membrane. It carries out the reaction UDP-N-acetyl-alpha-D-muramoyl-L-alanyl-gamma-D-glutamyl-meso-2,6-diaminopimeloyl-D-alanyl-D-alanine + di-trans,octa-cis-undecaprenyl phosphate = di-trans,octa-cis-undecaprenyl diphospho-N-acetyl-alpha-D-muramoyl-L-alanyl-D-glutamyl-meso-2,6-diaminopimeloyl-D-alanyl-D-alanine + UMP. It participates in cell wall biogenesis; peptidoglycan biosynthesis. In terms of biological role, catalyzes the initial step of the lipid cycle reactions in the biosynthesis of the cell wall peptidoglycan: transfers peptidoglycan precursor phospho-MurNAc-pentapeptide from UDP-MurNAc-pentapeptide onto the lipid carrier undecaprenyl phosphate, yielding undecaprenyl-pyrophosphoryl-MurNAc-pentapeptide, known as lipid I. The protein is Phospho-N-acetylmuramoyl-pentapeptide-transferase of Synechococcus sp. (strain JA-2-3B'a(2-13)) (Cyanobacteria bacterium Yellowstone B-Prime).